Here is a 311-residue protein sequence, read N- to C-terminus: Lipoyl synthase (311 aa).

[4Fe-4S] cluster-binding residues include Cys47, Cys52, Cys58, Cys73, Cys77, Cys80, and Ser287. The Radical SAM core domain maps to 59-276 (WTKKHATVMI…AQIARAKGFL (218 aa)).

Belongs to the radical SAM superfamily. Lipoyl synthase family. The cofactor is [4Fe-4S] cluster.

The protein localises to the cytoplasm. It carries out the reaction [[Fe-S] cluster scaffold protein carrying a second [4Fe-4S](2+) cluster] + N(6)-octanoyl-L-lysyl-[protein] + 2 oxidized [2Fe-2S]-[ferredoxin] + 2 S-adenosyl-L-methionine + 4 H(+) = [[Fe-S] cluster scaffold protein] + N(6)-[(R)-dihydrolipoyl]-L-lysyl-[protein] + 4 Fe(3+) + 2 hydrogen sulfide + 2 5'-deoxyadenosine + 2 L-methionine + 2 reduced [2Fe-2S]-[ferredoxin]. Its pathway is protein modification; protein lipoylation via endogenous pathway; protein N(6)-(lipoyl)lysine from octanoyl-[acyl-carrier-protein]: step 2/2. In terms of biological role, catalyzes the radical-mediated insertion of two sulfur atoms into the C-6 and C-8 positions of the octanoyl moiety bound to the lipoyl domains of lipoate-dependent enzymes, thereby converting the octanoylated domains into lipoylated derivatives. This is Lipoyl synthase from Sphingopyxis alaskensis (strain DSM 13593 / LMG 18877 / RB2256) (Sphingomonas alaskensis).